The primary structure comprises 513 residues: Histidine ammonia-lyase (513 aa).

The segment at residues 144–146 (ASG) is a cross-link (5-imidazolinone (Ala-Gly)). Ser145 carries the 2,3-didehydroalanine (Ser) modification.

It belongs to the PAL/histidase family. Post-translationally, contains an active site 4-methylidene-imidazol-5-one (MIO), which is formed autocatalytically by cyclization and dehydration of residues Ala-Ser-Gly.

It localises to the cytoplasm. The enzyme catalyses L-histidine = trans-urocanate + NH4(+). Its pathway is amino-acid degradation; L-histidine degradation into L-glutamate; N-formimidoyl-L-glutamate from L-histidine: step 1/3. This chain is Histidine ammonia-lyase, found in Streptococcus pyogenes serotype M1.